Consider the following 490-residue polypeptide: ATP synthase subunit alpha 1 (490 aa).

171–178 (GDNGLGKS) serves as a coordination point for ATP.

The protein belongs to the ATPase alpha/beta chains family. In terms of assembly, F-type ATPases have 2 components, CF(1) - the catalytic core - and CF(0) - the membrane proton channel. CF(1) has five subunits: alpha(3), beta(3), gamma(1), delta(1), epsilon(1). CF(0) has three main subunits: a(1), b(2) and c(9-12). The alpha and beta chains form an alternating ring which encloses part of the gamma chain. CF(1) is attached to CF(0) by a central stalk formed by the gamma and epsilon chains, while a peripheral stalk is formed by the delta and b chains.

It localises to the cell inner membrane. The enzyme catalyses ATP + H2O + 4 H(+)(in) = ADP + phosphate + 5 H(+)(out). Its function is as follows. Produces ATP from ADP in the presence of a proton gradient across the membrane. The alpha chain is a regulatory subunit. This Legionella pneumophila (strain Corby) protein is ATP synthase subunit alpha 1.